We begin with the raw amino-acid sequence, 184 residues long: Photosystem I assembly protein Ycf4 (184 aa).

2 consecutive transmembrane segments (helical) span residues 22-42 and 57-77; these read FCWA…GTSS and IIFF…LFIS.

This sequence belongs to the Ycf4 family.

It localises to the plastid. The protein localises to the chloroplast thylakoid membrane. Seems to be required for the assembly of the photosystem I complex. This Capsella bursa-pastoris (Shepherd's purse) protein is Photosystem I assembly protein Ycf4.